The chain runs to 557 residues: Probable protein kinase UbiB (557 aa).

In terms of domain architecture, Protein kinase spans 121 to 509 (SFDTVPLASA…RKLQTRVVTA (389 aa)). Residues 127-135 (LASASIAQV) and lysine 154 each bind ATP. The Proton acceptor role is filled by aspartate 289. The next 2 helical transmembrane spans lie at 506 to 526 (VVTAITGSGLLVVAAVLYGLH) and 535 to 555 (VPVWSWISGGAGSAALLVAWL).

This sequence belongs to the ABC1 family. UbiB subfamily.

Its subcellular location is the cell inner membrane. It participates in cofactor biosynthesis; ubiquinone biosynthesis [regulation]. In terms of biological role, is probably a protein kinase regulator of UbiI activity which is involved in aerobic coenzyme Q (ubiquinone) biosynthesis. In Xanthomonas axonopodis pv. citri (strain 306), this protein is Probable protein kinase UbiB.